The primary structure comprises 387 residues: NAD(P)H oxidoreductase RTN4IP1, mitochondrial (387 aa).

The N-terminal 27 residues, 1–27, are a transit peptide targeting the mitochondrion; it reads MLMCRRWLVCSLRCHYRSFSFSAARRT. Residues 38–379 enclose the Enoyl reductase (ER) domain; that stretch reads GKNDVLRFTK…QGHARGKTVV (342 aa). 11 residues coordinate NADPH: Ser200, Gly202, Val203, Ser223, Tyr241, Leu286, Gly327, Phe329, His372, Ala373, and Arg374.

The protein belongs to the zinc-containing alcohol dehydrogenase family. Quinone oxidoreductase subfamily.

The protein localises to the mitochondrion matrix. The protein resides in the mitochondrion outer membrane. The enzyme catalyses a 3-demethylubiquinone + NADH + 2 H(+) = a 3-demethylubiquinol + NAD(+). It carries out the reaction a 3-demethylubiquinone + NADPH + 2 H(+) = a 3-demethylubiquinol + NADP(+). It catalyses the reaction 3-demethylubiquinone-10 + NADH + 2 H(+) = 3-demethylubiquinol-10 + NAD(+). The catalysed reaction is 3-demethylubiquinone-10 + NADPH + 2 H(+) = 3-demethylubiquinol-10 + NADP(+). It functions in the pathway cofactor biosynthesis; ubiquinone biosynthesis. NAD(P)H oxidoreductase involved in the ubiquinone biosynthetic pathway. Required for the O-methyltransferase activity of COQ3. Able to catalyze the oxidoreduction of 3-demethylubiquinone into 3-demethylubiquinol in vitro. However, it is unclear if 3-demethylubiquinone constitutes a substrate in vivo. May also play a role in the regulation of retinal ganglion cell (RGC) neurite outgrowth, and hence in the development of the inner retina and optic nerve. This Danio rerio (Zebrafish) protein is NAD(P)H oxidoreductase RTN4IP1, mitochondrial (rtn4ip1).